The chain runs to 648 residues: Translation factor GUF1 homolog, mitochondrial (648 aa).

Positions 55 to 247 (ERVRNFSIIA…AVIERIPSPP (193 aa)) constitute a tr-type G domain. GTP contacts are provided by residues 64–71 (AHVDHGKS), 140–144 (DTPGH), and 194–197 (NKID).

Belongs to the TRAFAC class translation factor GTPase superfamily. Classic translation factor GTPase family. LepA subfamily.

It is found in the mitochondrion inner membrane. It catalyses the reaction GTP + H2O = GDP + phosphate + H(+). Its function is as follows. Promotes mitochondrial protein synthesis. May act as a fidelity factor of the translation reaction, by catalyzing a one-codon backward translocation of tRNAs on improperly translocated ribosomes. Binds to mitochondrial ribosomes in a GTP-dependent manner. The polypeptide is Translation factor GUF1 homolog, mitochondrial (Oryza sativa subsp. indica (Rice)).